The following is a 512-amino-acid chain: Maturase K (512 aa).

Belongs to the intron maturase 2 family. MatK subfamily.

Its subcellular location is the plastid. The protein localises to the chloroplast. Its function is as follows. Usually encoded in the trnK tRNA gene intron. Probably assists in splicing its own and other chloroplast group II introns. The protein is Maturase K of Koelreuteria paniculata (Goldenrain tree).